Here is a 178-residue protein sequence, read N- to C-terminus: 2-C-methyl-D-erythritol 2,4-cyclodiphosphate synthase (178 aa).

Asp-24, His-26, and His-61 together coordinate a divalent metal cation. Position 24 to 26 (24 to 26) interacts with 4-CDP-2-C-methyl-D-erythritol 2-phosphate; it reads DSH. A 4-CDP-2-C-methyl-D-erythritol 2-phosphate-binding site is contributed by 150–153; it reads TSGE.

It belongs to the IspF family. As to quaternary structure, homotrimer. A divalent metal cation serves as cofactor.

It catalyses the reaction 4-CDP-2-C-methyl-D-erythritol 2-phosphate = 2-C-methyl-D-erythritol 2,4-cyclic diphosphate + CMP. It functions in the pathway isoprenoid biosynthesis; isopentenyl diphosphate biosynthesis via DXP pathway; isopentenyl diphosphate from 1-deoxy-D-xylulose 5-phosphate: step 4/6. Involved in the biosynthesis of isopentenyl diphosphate (IPP) and dimethylallyl diphosphate (DMAPP), two major building blocks of isoprenoid compounds. Catalyzes the conversion of 4-diphosphocytidyl-2-C-methyl-D-erythritol 2-phosphate (CDP-ME2P) to 2-C-methyl-D-erythritol 2,4-cyclodiphosphate (ME-CPP) with a corresponding release of cytidine 5-monophosphate (CMP). The polypeptide is 2-C-methyl-D-erythritol 2,4-cyclodiphosphate synthase (Chlamydia trachomatis serovar A (strain ATCC VR-571B / DSM 19440 / HAR-13)).